A 278-amino-acid chain; its full sequence is uncharacterized protein (278 aa).

NAD(+) is bound by residues 112-113, 191-193, and Asp217; these read HI and VGR. Arg193 is an active-site residue. Glu222 is a catalytic residue. His241 (proton donor) is an active-site residue. Position 241 to 244 (241 to 244) interacts with NAD(+); that stretch reads HSAG.

It belongs to the D-isomer specific 2-hydroxyacid dehydrogenase family.

This is an uncharacterized protein from Streptomyces coelicolor.